We begin with the raw amino-acid sequence, 464 residues long: Non-structural protein NS-S (464 aa).

This sequence belongs to the tospovirus NS-S protein family. Interacts with host MYC2.

Multifunctional protein that plays two independent roles: viral suppressor of host RNAi (VSR) and viral inducer of host attractiveness to insect vectors (VIA). Acts as a suppressor of RNA-mediated gene silencing, also known as post-transcriptional gene silencing (PTGS), a mechanism of plant viral defense that limits the accumulation of viral RNAs. Also inhibits signal transduction by the phytohormone jasmonate, making the infected plant more attractive to aphids, which are the second host to play a role as a dissemination vector. Acts by binding to and inhibiting MYC2 transcription factor. The chain is Non-structural protein NS-S (NSS) from Frankliniella occidentalis (Western flower thrips).